We begin with the raw amino-acid sequence, 177 residues long: Large ribosomal subunit protein uL6 (177 aa).

Belongs to the universal ribosomal protein uL6 family. Part of the 50S ribosomal subunit.

Functionally, this protein binds to the 23S rRNA, and is important in its secondary structure. It is located near the subunit interface in the base of the L7/L12 stalk, and near the tRNA binding site of the peptidyltransferase center. This is Large ribosomal subunit protein uL6 from Salmonella arizonae (strain ATCC BAA-731 / CDC346-86 / RSK2980).